Here is a 352-residue protein sequence, read N- to C-terminus: Peptide chain release factor 1 (352 aa).

N5-methylglutamine is present on Gln229.

Belongs to the prokaryotic/mitochondrial release factor family. Post-translationally, methylated by PrmC. Methylation increases the termination efficiency of RF1.

The protein resides in the cytoplasm. Peptide chain release factor 1 directs the termination of translation in response to the peptide chain termination codons UAG and UAA. This chain is Peptide chain release factor 1, found in Gluconacetobacter diazotrophicus (strain ATCC 49037 / DSM 5601 / CCUG 37298 / CIP 103539 / LMG 7603 / PAl5).